Reading from the N-terminus, the 317-residue chain is Protoheme IX farnesyltransferase (317 aa).

The next 8 membrane-spanning stretches (helical) occupy residues 39–59 (VLYL…GGIN), 60–80 (PILG…AGAI), 109–129 (GALA…WLAT), 131–151 (LLAA…YTMW), 160–180 (IVIG…AATG), 184–204 (LLPV…FWAL), 249–269 (VLHL…LAFV), and 297–317 (FKFS…DHLV).

This sequence belongs to the UbiA prenyltransferase family. Protoheme IX farnesyltransferase subfamily.

It localises to the cell inner membrane. It catalyses the reaction heme b + (2E,6E)-farnesyl diphosphate + H2O = Fe(II)-heme o + diphosphate. Its pathway is porphyrin-containing compound metabolism; heme O biosynthesis; heme O from protoheme: step 1/1. Converts heme B (protoheme IX) to heme O by substitution of the vinyl group on carbon 2 of heme B porphyrin ring with a hydroxyethyl farnesyl side group. The protein is Protoheme IX farnesyltransferase of Acidiphilium cryptum (strain JF-5).